A 707-amino-acid polypeptide reads, in one-letter code: Polyribonucleotide nucleotidyltransferase (707 aa).

Residues Asp487 and Asp493 each contribute to the Mg(2+) site. In terms of domain architecture, KH spans 554–613; it reads PSMATIKIDPDKIRDVIGKGGATIRKICDDTGASIDLDDDGTVRIYAEDKTAAKAAIDTV. The 69-residue stretch at 623–691 folds into the S1 motif domain; the sequence is GKLYRGTVAR…NRNRVKLSIK (69 aa).

Belongs to the polyribonucleotide nucleotidyltransferase family. In terms of assembly, component of the RNA degradosome, which is a multiprotein complex involved in RNA processing and mRNA degradation. Mg(2+) serves as cofactor.

The protein resides in the cytoplasm. It catalyses the reaction RNA(n+1) + phosphate = RNA(n) + a ribonucleoside 5'-diphosphate. Its function is as follows. Involved in mRNA degradation. Catalyzes the phosphorolysis of single-stranded polyribonucleotides processively in the 3'- to 5'-direction. The polypeptide is Polyribonucleotide nucleotidyltransferase (Chromohalobacter salexigens (strain ATCC BAA-138 / DSM 3043 / CIP 106854 / NCIMB 13768 / 1H11)).